The primary structure comprises 560 residues: Trans-activating transcriptional regulatory protein (560 aa).

Disordered stretches follow at residues 1-25 and 99-134; these read MPKNMETLQRSYMGPSTPNHNLFNN and TGAETGAAGGSKRKASEVDSDSDSDDSSKGKKLVNK.

It belongs to the nucleopolyhedrovirus IE-1 protein family.

Its function is as follows. Regulatory transcriptional protein, which trans-activates gene expression from early baculovirus promoters. Can also trans-activate its own promoter, suggesting that it is autoregulated during normal infection of insect cells. The sequence is that of Trans-activating transcriptional regulatory protein (IE1) from Orgyia pseudotsugata (Douglas-fir tussock moth).